Consider the following 485-residue polypeptide: Hydrogenase transcriptional regulatory protein HoxA (485 aa).

A Response regulatory domain is found at 6 to 120; the sequence is TILVVDDEVR…QLVETVKEAV (115 aa). At Asp-54 the chain carries 4-aspartylphosphate. The region spanning 166-392 is the Sigma-54 factor interaction domain; the sequence is STESPMHAVI…ELQNEIQRMA (227 aa). ATP contacts are provided by residues 192–199 and 264–273; these read GESGTGKE and EIGETSPAFQ. Positions 404–426 are disordered; sequence PLLGRRNGKRSAPLPAHGRLNGS. The segment at residues 451-470 is a DNA-binding region (H-T-H motif); it reads NISRVASELGLSRVGLRNKL.

The protein localises to the cytoplasm. Functionally, probable member of the two-component regulatory system involved in the regulation of the hydrogenase activity. HoxA is probably phosphorylated by a sensory component (which could be HoxX) and then acts in conjunction with sigma-54 as a transcriptional activator. This Bradyrhizobium diazoefficiens (strain JCM 10833 / BCRC 13528 / IAM 13628 / NBRC 14792 / USDA 110) protein is Hydrogenase transcriptional regulatory protein HoxA (hoxA).